The primary structure comprises 347 residues: tRNA pseudouridine synthase D (347 aa).

The active-site Nucleophile is the Asp-81. Residues 158–305 (GVPNYFGSQR…RHDRRDIALK (148 aa)) form the TRUD domain.

The protein belongs to the pseudouridine synthase TruD family.

The catalysed reaction is uridine(13) in tRNA = pseudouridine(13) in tRNA. Responsible for synthesis of pseudouridine from uracil-13 in transfer RNAs. This Vibrio campbellii (strain ATCC BAA-1116) protein is tRNA pseudouridine synthase D.